We begin with the raw amino-acid sequence, 62 residues long: DNA-binding protein 7 (62 aa).

The protein belongs to the 7 kDa DNA-binding/endoribonuclease P2 family. As to quaternary structure, monomer.

The protein localises to the cytoplasm. In terms of biological role, can constrain negative DNA supercoils. May be involved in maintaining the integrity of the genome at high temperature. This chain is DNA-binding protein 7, found in Metallosphaera sedula (strain ATCC 51363 / DSM 5348 / JCM 9185 / NBRC 15509 / TH2).